Reading from the N-terminus, the 384-residue chain is ATP phosphoribosyltransferase regulatory subunit (384 aa).

Belongs to the class-II aminoacyl-tRNA synthetase family. HisZ subfamily. As to quaternary structure, heteromultimer composed of HisG and HisZ subunits.

The protein resides in the cytoplasm. It participates in amino-acid biosynthesis; L-histidine biosynthesis; L-histidine from 5-phospho-alpha-D-ribose 1-diphosphate: step 1/9. Functionally, required for the first step of histidine biosynthesis. May allow the feedback regulation of ATP phosphoribosyltransferase activity by histidine. This is ATP phosphoribosyltransferase regulatory subunit from Paracidovorax citrulli (strain AAC00-1) (Acidovorax citrulli).